The primary structure comprises 227 residues: Ornithine decarboxylase antizyme 1 (227 aa).

The tract at residues E20–S50 is disordered. Residues L36–S50 are compositionally biased toward low complexity.

The protein belongs to the ODC antizyme family. In terms of assembly, interacts with ODC1 and thereby sterically blocks ODC homodimerization. Forms a ternary complex with PSMB4 and OAZ1 before PSMB4 is incorporated into the 20S proteasome. Interacts with AZIN2; this interaction disrupts the interaction between the antizyme and ODC1. Interacts with FAM171A1.

In terms of biological role, ornithine decarboxylase (ODC) antizyme protein that negatively regulates ODC activity and intracellular polyamine biosynthesis and uptake in response to increased intracellular polyamine levels. Binds to ODC monomers, inhibiting the assembly of the functional ODC homodimer, and targets the monomers for ubiquitin-independent proteolytic destruction by the 26S proteasome. Triggers ODC degradation by inducing the exposure of a cryptic proteasome-interacting surface of ODC. Stabilizes AZIN2 by interfering with its ubiquitination. Also inhibits cellular uptake of polyamines by inactivating the polyamine uptake transporter. SMAD1/OAZ1/PSMB4 complex mediates the degradation of the CREBBP/EP300 repressor SNIP1. Involved in the translocation of AZIN2 from ER-Golgi intermediate compartment (ERGIC) to the cytosol. This chain is Ornithine decarboxylase antizyme 1 (OAZ1), found in Bos taurus (Bovine).